The sequence spans 83 residues: Kunitz-type serine protease inhibitor microlepidin-1 (83 aa).

The signal sequence occupies residues 1-24 (MSSGGLLLLLGLLTLWEVLTPVSS). The region spanning 31–81 (CELPADTGPCRVGFPSFYYNPDEKKCLEFIYGGCEGNANNFITKEECESTC) is the BPTI/Kunitz inhibitor domain. Disulfide bonds link Cys31–Cys81, Cys40–Cys64, and Cys56–Cys77.

Belongs to the venom Kunitz-type family. Expressed by the venom gland.

Its subcellular location is the secreted. Its function is as follows. Serine protease inhibitor. The polypeptide is Kunitz-type serine protease inhibitor microlepidin-1 (Oxyuranus microlepidotus (Inland taipan)).